The chain runs to 452 residues: PHO85 cyclin CLG1 (452 aa).

The protein belongs to the cyclin family. PCL1,2 subfamily. In terms of assembly, forms a cyclin-CDK complex with PHO85.

Cyclin partner of the cyclin-dependent kinase (CDK) PHO85. Has a role in cell integrity and polarized cell growth together with the other PCL1/PCL2 cyclin family members. In Saccharomyces cerevisiae (strain ATCC 204508 / S288c) (Baker's yeast), this protein is PHO85 cyclin CLG1 (CLG1).